The following is a 203-amino-acid chain: Abscisic acid receptor PYL5 (203 aa).

Polar residues predominate over residues 1-18 (MRSPVQLQHGSDATNGFH). Residues 1 to 29 (MRSPVQLQHGSDATNGFHTLQPHDQTDGP) form a disordered region. Residues 51–201 (HDVGPDQCCS…NLQSLARSTN (151 aa)) are START-like. Abscisate contacts are provided by residues Lys87, 117–122 (AVSSTE), 144–150 (RLKNYRS), and Glu166. The short motif at 113-117 (SGLPA) is the Gate loop element. Positions 143-145 (HRL) match the Latch loop motif.

This sequence belongs to the PYR/PYL/RCAR abscisic acid intracellular receptor family. As to quaternary structure, monomer. Homodimer. Binds ABA on one subunit only. Binds to CARs protein in an ABA-independent manner, both at the plasma membrane and in the nucleus. Binds both (-)-ABA and (+)-ABA. Interacts with HAB1, ABI1 and ABI2, and possibly with other PP2Cs.

Its subcellular location is the cytoplasm. The protein resides in the nucleus. It localises to the cell membrane. Functionally, receptor for abscisic acid (ABA) required for ABA-mediated responses such as stomatal closure and germination inhibition. Inhibits the activity of group-A protein phosphatases type 2C (PP2Cs) in an ABA-independent manner but more efficiently when activated by ABA. Confers enhanced sensitivity to ABA. Can be activated by both (-)-ABA and (+)-ABA. The sequence is that of Abscisic acid receptor PYL5 (PYL5) from Arabidopsis thaliana (Mouse-ear cress).